Consider the following 328-residue polypeptide: Ankyrin repeat domain-containing protein 2 (328 aa).

A Phosphoserine modification is found at Ser36. Ser68 carries the post-translational modification Phosphoserine; by PKB/AKT2. Positions 96-116 (RDALAAAQEPPPEPEEITGPV) are disordered. ANK repeat units lie at residues 116–145 (VNEE…SADT), 149–178 (FRRT…TVDF), 182–211 (LDCT…DTNV), 215–244 (LLST…DINA), and 248–277 (EGDS…DMMA). The tract at residues 297–328 (RHALEHPEPESEQNGLERPGSGRETPQPIPAQ) is disordered.

As to quaternary structure, interacts with ID3; both proteins cooperate in myoblast differentiation. Interacts with TTN/titin. Interacts (via ANK repeats) with TCAP; the interaction is direct. Interacts with TJP1 (via PDZ domains). Interacts with PML; the interaction is direct. Interacts with p53/TP53. Interacts with YBX1. Interacts with AKT2. In terms of processing, phosphorylation at Ser-68 by PKB/AKT2 in response to oxidative stress induces translocation to the nucleus and negatively regulates myoblast differentiation. In terms of tissue distribution, expressed by myoblasts (at protein level). Expressed in skeletal and cardiac muscles.

It is found in the cytoplasm. It localises to the myofibril. The protein localises to the sarcomere. The protein resides in the i band. Its subcellular location is the cytosol. It is found in the nucleus. It localises to the PML body. Its function is as follows. Functions as a negative regulator of myocyte differentiation. May interact with both sarcoplasmic structural proteins and nuclear proteins to regulate gene expression during muscle development and in response to muscle stress. The chain is Ankyrin repeat domain-containing protein 2 (Ankrd2) from Mus musculus (Mouse).